Consider the following 243-residue polypeptide: tRNA (guanine-N(1)-)-methyltransferase (243 aa).

Residues G108 and 127–132 contribute to the S-adenosyl-L-methionine site; that span reads LGDYVL.

It belongs to the RNA methyltransferase TrmD family. As to quaternary structure, homodimer.

The protein resides in the cytoplasm. The enzyme catalyses guanosine(37) in tRNA + S-adenosyl-L-methionine = N(1)-methylguanosine(37) in tRNA + S-adenosyl-L-homocysteine + H(+). Functionally, specifically methylates guanosine-37 in various tRNAs. This chain is tRNA (guanine-N(1)-)-methyltransferase, found in Streptococcus gordonii (strain Challis / ATCC 35105 / BCRC 15272 / CH1 / DL1 / V288).